We begin with the raw amino-acid sequence, 55 residues long: UPF0291 protein CA_C2726 (55 aa).

The protein belongs to the UPF0291 family.

It is found in the cytoplasm. The protein is UPF0291 protein CA_C2726 of Clostridium acetobutylicum (strain ATCC 824 / DSM 792 / JCM 1419 / IAM 19013 / LMG 5710 / NBRC 13948 / NRRL B-527 / VKM B-1787 / 2291 / W).